The following is a 335-amino-acid chain: Fructose-1,6-bisphosphatase class 1 (335 aa).

The Mg(2+) site is built by Glu94, Asp113, Leu115, and Asp116. Substrate is bound by residues 116–119, Asn208, and Lys274; that span reads DGSS. Glu280 contributes to the Mg(2+) binding site.

The protein belongs to the FBPase class 1 family. In terms of assembly, homotetramer. The cofactor is Mg(2+).

The protein resides in the cytoplasm. The catalysed reaction is beta-D-fructose 1,6-bisphosphate + H2O = beta-D-fructose 6-phosphate + phosphate. The protein operates within carbohydrate biosynthesis; gluconeogenesis. This chain is Fructose-1,6-bisphosphatase class 1, found in Polynucleobacter asymbioticus (strain DSM 18221 / CIP 109841 / QLW-P1DMWA-1) (Polynucleobacter necessarius subsp. asymbioticus).